The sequence spans 82 residues: Sec-independent protein translocase protein TatA (82 aa).

The helical transmembrane segment at 1–21 (MGGISIWQLLIIAVIIVLLFG) threads the bilayer. Residues 48 to 82 (PAKEAKKDADFVPQNLEKKEAETVEKQKQNDKEQA) are disordered.

The protein belongs to the TatA/E family. In terms of assembly, the Tat system comprises two distinct complexes: a TatABC complex, containing multiple copies of TatA, TatB and TatC subunits, and a separate TatA complex, containing only TatA subunits. Substrates initially bind to the TatABC complex, which probably triggers association of the separate TatA complex to form the active translocon.

It localises to the cell inner membrane. In terms of biological role, part of the twin-arginine translocation (Tat) system that transports large folded proteins containing a characteristic twin-arginine motif in their signal peptide across membranes. TatA could form the protein-conducting channel of the Tat system. In Aliivibrio fischeri (strain ATCC 700601 / ES114) (Vibrio fischeri), this protein is Sec-independent protein translocase protein TatA.